Here is a 430-residue protein sequence, read N- to C-terminus: Elongation factor Tu (430 aa).

Positions 13-220 constitute a tr-type G domain; it reads RPHLNIGTIG…ACDKYIALPE (208 aa). The interval 22 to 29 is G1; that stretch reads GHVDHGKT. 22-29 contributes to the GTP binding site; sequence GHVDHGKT. Residue threonine 29 participates in Mg(2+) binding. The interval 66–70 is G2; it reads GITIS. The segment at 87 to 90 is G3; it reads DCPG. GTP-binding positions include 87 to 91 and 142 to 145; these read DCPGH and NKCD. The tract at residues 142 to 145 is G4; the sequence is NKCD. The G5 stretch occupies residues 188–190; that stretch reads SAL.

This sequence belongs to the TRAFAC class translation factor GTPase superfamily. Classic translation factor GTPase family. EF-Tu/EF-1A subfamily. Monomer.

It is found in the cytoplasm. The catalysed reaction is GTP + H2O = GDP + phosphate + H(+). GTP hydrolase that promotes the GTP-dependent binding of aminoacyl-tRNA to the A-site of ribosomes during protein biosynthesis. The protein is Elongation factor Tu of Neorickettsia sennetsu (strain ATCC VR-367 / Miyayama) (Ehrlichia sennetsu).